The chain runs to 349 residues: GTPase Obg (349 aa).

An Obg domain is found at 1–159; sequence MKFLDQAKVY…LWIWLRLKLI (159 aa). Residues 160–327 enclose the OBG-type G domain; it reads ADAGLIGLPN…VLRALMRVVQ (168 aa). Residues 166–173, 191–195, 212–215, 279–282, and 308–310 contribute to the GTP site; these read GLPNAGKS, FTTLH, DIPG, SQID, and SSA. Serine 173 and threonine 193 together coordinate Mg(2+).

Belongs to the TRAFAC class OBG-HflX-like GTPase superfamily. OBG GTPase family. In terms of assembly, monomer. It depends on Mg(2+) as a cofactor.

Its subcellular location is the cytoplasm. Functionally, an essential GTPase which binds GTP, GDP and possibly (p)ppGpp with moderate affinity, with high nucleotide exchange rates and a fairly low GTP hydrolysis rate. Plays a role in control of the cell cycle, stress response, ribosome biogenesis and in those bacteria that undergo differentiation, in morphogenesis control. The polypeptide is GTPase Obg (Chelativorans sp. (strain BNC1)).